The sequence spans 346 residues: Holliday junction branch migration complex subunit RuvB (346 aa).

The large ATPase domain (RuvB-L) stretch occupies residues 1–181 (MSDRNPLIDA…FGIPVRLNFY (181 aa)). Residues L20, R21, G62, K65, T66, T67, 128-130 (EDF), R171, Y181, and R218 each bind ATP. Mg(2+) is bound at residue T66. The segment at 182–252 (TVEELEYIVR…IADEALSRLE (71 aa)) is small ATPAse domain (RuvB-S). The interval 255–346 (NRGLDQLDRR…SQYGLFMEDE (92 aa)) is head domain (RuvB-H). Positions 291, 310, and 315 each coordinate DNA.

It belongs to the RuvB family. In terms of assembly, homohexamer. Forms an RuvA(8)-RuvB(12)-Holliday junction (HJ) complex. HJ DNA is sandwiched between 2 RuvA tetramers; dsDNA enters through RuvA and exits via RuvB. An RuvB hexamer assembles on each DNA strand where it exits the tetramer. Each RuvB hexamer is contacted by two RuvA subunits (via domain III) on 2 adjacent RuvB subunits; this complex drives branch migration. In the full resolvosome a probable DNA-RuvA(4)-RuvB(12)-RuvC(2) complex forms which resolves the HJ.

It localises to the cytoplasm. It carries out the reaction ATP + H2O = ADP + phosphate + H(+). Functionally, the RuvA-RuvB-RuvC complex processes Holliday junction (HJ) DNA during genetic recombination and DNA repair, while the RuvA-RuvB complex plays an important role in the rescue of blocked DNA replication forks via replication fork reversal (RFR). RuvA specifically binds to HJ cruciform DNA, conferring on it an open structure. The RuvB hexamer acts as an ATP-dependent pump, pulling dsDNA into and through the RuvAB complex. RuvB forms 2 homohexamers on either side of HJ DNA bound by 1 or 2 RuvA tetramers; 4 subunits per hexamer contact DNA at a time. Coordinated motions by a converter formed by DNA-disengaged RuvB subunits stimulates ATP hydrolysis and nucleotide exchange. Immobilization of the converter enables RuvB to convert the ATP-contained energy into a lever motion, pulling 2 nucleotides of DNA out of the RuvA tetramer per ATP hydrolyzed, thus driving DNA branch migration. The RuvB motors rotate together with the DNA substrate, which together with the progressing nucleotide cycle form the mechanistic basis for DNA recombination by continuous HJ branch migration. Branch migration allows RuvC to scan DNA until it finds its consensus sequence, where it cleaves and resolves cruciform DNA. The chain is Holliday junction branch migration complex subunit RuvB from Brucella melitensis biotype 2 (strain ATCC 23457).